A 258-amino-acid chain; its full sequence is Coiled-coil domain-containing protein 127 (258 aa).

Residues Lys-50–Ile-170 adopt a coiled-coil conformation.

The protein is Coiled-coil domain-containing protein 127 (CCDC127) of Sus scrofa (Pig).